Reading from the N-terminus, the 232-residue chain is MEDFKQSVNTYSSEGRIHQIEYAMKAMNLGTTTIGVRTKEFVILCSEKKILSTLQNPKSVVKHYKIYDHIVLGFSGISGDTKTIVKRSRDFCISHTHMYGENISVERLLKYLSSLSLRFGEEDEAKMIFRRPFGVSLIIAGFDTEPRLYSLDPSGSYISYKAKAIGSGHEVVEGILENEYEEYSGLDQSLRKVLCTLSKVMKDKISKDNVEVVVVTQEESKFLTPEEVSVYL.

Belongs to the peptidase T1A family. The 26S proteasome consists of a 20S proteasome core and two 19S regulatory subunits. The 20S proteasome core is composed of 28 subunits that are arranged in four stacked rings, resulting in a barrel-shaped structure. The two end rings are each formed by seven alpha subunits, and the two central rings are each formed by seven beta subunits. The catalytic chamber with the active sites is on the inside of the barrel.

Its subcellular location is the cytoplasm. The protein localises to the nucleus. Its function is as follows. The proteasome degrades poly-ubiquitinated proteins in the cytoplasm and in the nucleus. It is essential for the regulated turnover of proteins and for the removal of misfolded proteins. The proteasome is a multicatalytic proteinase complex that is characterized by its ability to cleave peptides with Arg, Phe, Tyr, Leu, and Glu adjacent to the leaving group at neutral or slightly basic pH. It has an ATP-dependent proteolytic activity. In Encephalitozoon cuniculi (strain GB-M1) (Microsporidian parasite), this protein is Probable proteasome subunit alpha type-5 (PUP2).